A 976-amino-acid chain; its full sequence is Collagen alpha-1(I) chain (976 aa).

Ser1 carries the phosphoserine modification. The segment at 1 to 976 (SAGGISVPGP…PGPPGPPGPP (976 aa)) is disordered. Residues Pro20, Pro23, Pro26, Pro35, Pro38, Pro41, Pro55, Pro70, Pro76, Pro85, and Pro91 each carry the 4-hydroxyproline modification. The span at 58–72 (NGDDGEAGKPGRPGE) shows a compositional bias: basic and acidic residues. The residue at position 94 (Lys94) is a 5-hydroxylysine; alternate. O-linked (Gal...) hydroxylysine; alternate glycosylation occurs at Lys94. Ser100 is modified (phosphoserine). 2 stretches are compositionally biased toward low complexity: residues 108-118 (DAGPAGPKGAP) and 132-150 (PGAS…TGAA). 13 positions are modified to 4-hydroxyproline: Pro118, Pro132, Pro153, Pro162, Pro165, Pro192, Pro195, Pro207, Pro213, Pro222, Pro228, Pro231, and Pro246. Residues 152–164 (PPGPTGPAGPPGF) show a composition bias toward pro residues. The span at 198–237 (AGAAGPAGNPGADGQPGAKGANGAPGIAGAPGFPGARGPS) shows a compositional bias: low complexity. Residue Lys249 is modified to 5-hydroxylysine. Residues Pro255, Pro258, Pro266, Pro275, Pro290, Pro296, Pro304, and Pro310 each carry the 4-hydroxyproline modification. The span at 294 to 308 (GLPGPGERGGPGSRG) shows a compositional bias: gly residues. Lys319 is modified (5-hydroxylysine). Residues Pro328, Pro337, Pro343, Pro349, Pro358, Pro361, Pro370, Pro379, Pro385, Pro397, Pro406, Pro415, Pro418, Pro436, Pro453, Pro459, Pro465, Pro471, Pro477, Pro483, Pro495, Pro504, Pro517, Pro523, and Pro532 each carry the 4-hydroxyproline modification. Low complexity predominate over residues 352 to 378 (KGLTGSPGSPGPDGKTGPPGPAGQDGR). Residues 387 to 406 (ARGQAGVMGFPGPKGAAGEP) are compositionally biased toward low complexity. Residues 465–474 (PGEAGKPGEQ) show a composition bias toward low complexity. Lys544 carries the 5-hydroxylysine modification. Pro550, Pro565, and Pro571 each carry 4-hydroxyproline. Residues 577 to 591 (SGPSGPAGPTGARGA) are compositionally biased toward low complexity. Phosphoserine is present on Ser580. Residues Pro592, Pro598, Pro601, Pro610, Pro616, Pro634, Pro643, and Pro652 each carry the 4-hydroxyproline modification. A compositionally biased stretch (low complexity) spans 604-631 (AGFAGPPGADGQPGAKGEPGDAGAKGDA). Lys655 is subject to 5-hydroxylysine. Over residues 660-676 (SAGPPGATGFPGAAGRV) the composition is skewed to low complexity. 2 positions are modified to 4-hydroxyproline: Pro664 and Pro670. Pro678 carries the post-translational modification 3-hydroxyproline. 4-hydroxyproline occurs at positions 679, 688, 691, 718, 726, 735, 753, 762, 765, 771, 786, 792, 798, 806, and 812. The segment covering 723 to 735 (KGSPGADGPAGAP) has biased composition (low complexity). Pro residues predominate over residues 785-795 (PPGPMGPPGLA). The residue at position 821 (Lys821) is a 5-hydroxylysine. A compositionally biased stretch (pro residues) spans 829–844 (PGPPGAPGAPGAPGPV). 4-hydroxyproline is present on residues Pro832, Pro835, and Pro838. The span at 864–878 (AGPAGARGPAGPQGP) shows a compositional bias: low complexity. The segment covering 879 to 893 (RGDKGETGEQGDRGI) has biased composition (basic and acidic residues). Lys882 is modified (5-hydroxylysine). Lys894 is subject to 5-hydroxylysine; alternate. An O-linked (Gal...) hydroxylysine; alternate glycan is attached at Lys894. Residues Pro907, Pro910, Pro928, and Pro943 each carry the 4-hydroxyproline modification. A compositionally biased stretch (low complexity) spans 910 to 943 (PGEQGPSGASGPAGPRGPPGSAGSPGKDGLNGLP). Residue Pro948 is modified to 3-hydroxyproline. 4-hydroxyproline is present on Pro949. Over residues 961-976 (VGPPGPPGPPGPPGPP) the composition is skewed to pro residues. A 3-hydroxyproline modification is found at Pro963. Pro964 is subject to 4-hydroxyproline. Pro966 carries the post-translational modification 3-hydroxyproline. Pro967 bears the 4-hydroxyproline mark. A 3-hydroxyproline modification is found at Pro969. A 4-hydroxyproline mark is found at Pro970, Pro973, and Pro976.

Belongs to the fibrillar collagen family. As to quaternary structure, trimers of one alpha 2(I) and two alpha 1(I) chains. Post-translationally, contains mostly 4-hydroxyproline. Proline residues at the third position of the tripeptide repeating unit (G-X-Y) are hydroxylated in some or all of the chains. In terms of processing, contains 3-hydroxyproline at a few sites. This modification occurs on the first proline residue in the sequence motif Gly-Pro-Hyp, where Hyp is 4-hydroxyproline. Lysine residues at the third position of the tripeptide repeating unit (G-X-Y) are 5-hydroxylated in some or all of the chains. Post-translationally, O-glycosylated on hydroxylated lysine residues. The O-linked glycan consists of a Glc-Gal disaccharide. Expressed in bones.

The protein localises to the secreted. The protein resides in the extracellular space. It localises to the extracellular matrix. Type I collagen is a member of group I collagen (fibrillar forming collagen). The polypeptide is Collagen alpha-1(I) chain (Acratocnus ye (Hispaniolan ground sloth)).